A 601-amino-acid chain; its full sequence is RNA-binding protein MEX3B (601 aa).

Disordered regions lie at residues Met1–Arg39 and Gly90–Thr109. Residue Ser4 is modified to Phosphoserine. Positions Gly13 to Glu33 are enriched in gly residues. KH domains follow at residues Asp98–Ile159 and Gln192–Ile253. Disordered stretches follow at residues Leu284–Tyr332 and Thr344–Ser448. The residue at position 320 (Ser320) is a Phosphoserine. Composition is skewed to low complexity over residues Ser320 to Ser331 and Asn362 to Gly371. Positions Asp395–Thr404 are enriched in pro residues. Over residues Ala420 to Phe442 the composition is skewed to low complexity. Ser494 carries the phosphoserine modification. A disordered region spans residues Leu514 to Gly546. A compositionally biased stretch (low complexity) spans Ser519–Ser540. The segment at Cys550 to His590 adopts an RING-type zinc-finger fold.

Phosphorylation at Ser-494 creates a docking site for 14-3-3, which stabilizes the protein and modulates its ability to bind RNA.

The protein resides in the cytoplasm. The protein localises to the nucleus. It localises to the P-body. Its subcellular location is the cytoplasmic granule. In terms of biological role, RNA-binding protein. May be involved in post-transcriptional regulatory mechanisms. In Mus musculus (Mouse), this protein is RNA-binding protein MEX3B (Mex3b).